Reading from the N-terminus, the 407-residue chain is Sensor histidine kinase YdfH (407 aa).

At 1 to 25 (MLIRNPFKDKYYSHDRRALNMLALR) the chain is on the cytoplasmic side. Helical transmembrane passes span 26 to 46 (VPGL…QFVS) and 47 to 67 (GGWS…FALL). Over 68 to 78 (HWHSYRWVKKR) the chain is Cytoplasmic. 2 consecutive transmembrane segments (helical) span residues 79–99 (VILY…LMTG) and 100–120 (FFIL…IGMA). Residues 121–125 (DRRRT) are Cytoplasmic-facing. A helical membrane pass occupies residues 126–146 (FLILYLLLLLVINSAYHLHKG). Over 147 to 150 (EVLH) the chain is Extracellular. The chain crosses the membrane as a helical span at residues 151 to 171 (FIVIAAPIMIVIITYAATFFA). Residues 172-407 (QVDEKIKAQL…VPIQGEMQDE (236 aa)) lie on the Cytoplasmic side of the membrane. In terms of domain architecture, Histidine kinase spans 201–402 (ERQRMARDLH…QIEITVPIQG (202 aa)). Histidine 210 carries the phosphohistidine; by autocatalysis modification.

It is found in the cell membrane. The enzyme catalyses ATP + protein L-histidine = ADP + protein N-phospho-L-histidine.. In terms of biological role, member of the two-component regulatory system YdfH/YdfI. May activate YdfI by phosphorylation. This chain is Sensor histidine kinase YdfH (ydfH), found in Bacillus subtilis (strain 168).